The sequence spans 72 residues: Protein RALF-like 36 (72 aa).

The first 27 residues, 1-27 (MGISKKTVVQSFALIIIISIVMSTTEA), serve as a signal peptide directing secretion. Disulfide bonds link cysteine 43/cysteine 51 and cysteine 63/cysteine 69.

This sequence belongs to the plant rapid alkalinization factor (RALF) family.

The protein resides in the secreted. Cell signaling peptide that may regulate plant stress, growth, and development. Mediates a rapid alkalinization of extracellular space by mediating a transient increase in the cytoplasmic Ca(2+) concentration leading to a calcium-dependent signaling events through a cell surface receptor and a concomitant activation of some intracellular mitogen-activated protein kinases. The sequence is that of Protein RALF-like 36 from Arabidopsis thaliana (Mouse-ear cress).